The primary structure comprises 148 residues: Large ribosomal subunit protein bL27m (148 aa).

The N-terminal 30 residues, 1 to 30, are a transit peptide targeting the mitochondrion; that stretch reads MAAAALTLRTRAAVTALLSPTAPTALAVRH. A disordered region spans residues 28–48; that stretch reads VRHASKKTGGSSKNLGGKSRG.

The protein belongs to the bacterial ribosomal protein bL27 family. Component of the mitochondrial ribosome large subunit (39S) which comprises a 16S rRNA and about 50 distinct proteins.

Its subcellular location is the mitochondrion. The protein is Large ribosomal subunit protein bL27m (Mrpl27) of Mus musculus (Mouse).